A 414-amino-acid polypeptide reads, in one-letter code: Putative competence-damage inducible protein (414 aa).

Belongs to the CinA family.

This Listeria monocytogenes serovar 1/2a (strain ATCC BAA-679 / EGD-e) protein is Putative competence-damage inducible protein.